Reading from the N-terminus, the 340-residue chain is DNA polymerase III subunit delta' (340 aa).

In terms of assembly, the DNA polymerase holoenzyme is a complex that contains 10 different types of subunits. These subunits are organized into 3 functionally essential subassemblies: the pol III core, the beta sliding clamp processivity factor and the clamp-loading complex. The pol III core (subunits alpha,epsilon and theta) contains the polymerase and the 3'-5' exonuclease proofreading activities. The polymerase is tethered to the template via the sliding clamp processivity factor. The clamp-loading complex assembles the beta processivity factor onto the primer template and plays a central role in the organization and communication at the replication fork. This complex contains delta, delta', psi and chi, and copies of either or both of two different DnaX proteins, gamma and tau. The composition of the holoenzyme is, therefore: (alpha,epsilon,theta)[2]-(gamma/tau)[3]-delta,delta', psi,chi-beta[4].

It catalyses the reaction DNA(n) + a 2'-deoxyribonucleoside 5'-triphosphate = DNA(n+1) + diphosphate. DNA polymerase III is a complex, multichain enzyme responsible for most of the replicative synthesis in bacteria. This DNA polymerase also exhibits 3' to 5' exonuclease activity. The protein is DNA polymerase III subunit delta' (holB) of Yersinia pestis.